Here is a 362-residue protein sequence, read N- to C-terminus: MFLRLFKYLWPERYLPETPAQDPFDENPPPCGPGRVGVLLVNLGTPDEPTRGAIRRYLGEFLSDPRVIEIPRYLWMPILHGLVLAMRPKKLAPRYAGIWMEEGSPLLVYSQRQAAGVRQGLAARGVHAEVELAMRYGKPSIPAAITALRERGCDHILAVPLYPQYAASTTATVVDAVTRHAGRLRDQPALRFVKRFHNDPAYVEAQAGRIAEFWQAHGRPQKLVMSFHGLPRYSIELGDPYYRDCLDTARLLRERLGLREDEVEVTFQSRFGSARWLEPYTEPTLAELARQGVTEVDVVCPGFVADCLETLEEISQECRDAFVAAGGRQFRYIPALNDCPPWIEGLTDLVERQLRGWPTGNP.

Residues His-228 and Glu-309 each coordinate Fe cation.

This sequence belongs to the ferrochelatase family.

The protein localises to the cytoplasm. It carries out the reaction heme b + 2 H(+) = protoporphyrin IX + Fe(2+). It participates in porphyrin-containing compound metabolism; protoheme biosynthesis; protoheme from protoporphyrin-IX: step 1/1. Functionally, catalyzes the ferrous insertion into protoporphyrin IX. In Bordetella bronchiseptica (strain ATCC BAA-588 / NCTC 13252 / RB50) (Alcaligenes bronchisepticus), this protein is Ferrochelatase.